A 335-amino-acid polypeptide reads, in one-letter code: Glycerol-3-phosphate dehydrogenase [NAD(P)+] (335 aa).

3 residues coordinate NADPH: serine 12, tryptophan 13, and lysine 107. Lysine 107, glycine 138, and serine 140 together coordinate sn-glycerol 3-phosphate. Residue alanine 142 participates in NADPH binding. Sn-glycerol 3-phosphate contacts are provided by lysine 193, aspartate 246, serine 256, arginine 257, and asparagine 258. Lysine 193 acts as the Proton acceptor in catalysis. Arginine 257 is a binding site for NADPH. NADPH contacts are provided by valine 281 and glutamate 283.

The protein belongs to the NAD-dependent glycerol-3-phosphate dehydrogenase family.

Its subcellular location is the cytoplasm. The enzyme catalyses sn-glycerol 3-phosphate + NAD(+) = dihydroxyacetone phosphate + NADH + H(+). It catalyses the reaction sn-glycerol 3-phosphate + NADP(+) = dihydroxyacetone phosphate + NADPH + H(+). It participates in membrane lipid metabolism; glycerophospholipid metabolism. Functionally, catalyzes the reduction of the glycolytic intermediate dihydroxyacetone phosphate (DHAP) to sn-glycerol 3-phosphate (G3P), the key precursor for phospholipid synthesis. The polypeptide is Glycerol-3-phosphate dehydrogenase [NAD(P)+] (Geobacter sulfurreducens (strain ATCC 51573 / DSM 12127 / PCA)).